A 253-amino-acid polypeptide reads, in one-letter code: 2-dehydro-3-deoxy-D-gluconate 5-dehydrogenase (253 aa).

Residue 14–38 (LITGCDTGLGQGMAVGLAEAGCDIV) participates in NAD(+) binding. Position 145 (Ser145) interacts with substrate. The active-site Proton acceptor is Tyr158.

This sequence belongs to the short-chain dehydrogenases/reductases (SDR) family.

The enzyme catalyses 2-dehydro-3-deoxy-D-gluconate + NAD(+) = 3-deoxy-D-glycero-2,5-hexodiulosonate + NADH + H(+). Its pathway is glycan metabolism; pectin degradation; 2-dehydro-3-deoxy-D-gluconate from pectin: step 5/5. Catalyzes the reduction of 2,5-diketo-3-deoxygluconate (DKII or 4,6-dihydroxy-2,5-dioxohexanoate) into 2-keto-3-deoxygluconate (KDG or 2-dehydro-3-deoxygluconate) with a concomitant oxidation of NADH. The protein is 2-dehydro-3-deoxy-D-gluconate 5-dehydrogenase (kduD) of Dickeya dadantii (strain 3937) (Erwinia chrysanthemi (strain 3937)).